A 126-amino-acid chain; its full sequence is Scygonadin (126 aa).

The N-terminal stretch at 1–24 (MRSSLLLGLTVVVLLGVIVPPCMA) is a signal peptide.

In terms of tissue distribution, expressed in the ejaculatory ducts of mature males. Not detected in the ejaculatory ducts of immature males. Not detected in hepatopancreas, female reproductive tract, eyes, exoskeleton, subcuticular epithelia, heart, gills, stomach, muscle and hemocytes.

It is found in the secreted. Has antibacterial activity against the Gram-positive bacterium M.luteus with an IC(90) of 125ug/ml. Has weak antibacterial activity against the Gram-negative bacterium A.hydrophila. This Scylla serrata (Mud crab) protein is Scygonadin.